Reading from the N-terminus, the 99-residue chain is MVLRRLLAALLHSPQLVERLSESRPIRRAAQLTAFALLQAQLRGQDAARRLQDLAAGPVGSLCRRAERFRDAFTQELRRGLRGRSGPPPGSQRGPGANI.

The disordered stretch occupies residues 76 to 99 (ELRRGLRGRSGPPPGSQRGPGANI).

The chain is Protein NCBP2AS2 from Homo sapiens (Human).